The primary structure comprises 316 residues: Transcription initiation factor IIB (316 aa).

A TFIIB-type zinc finger spans residues 11–42 (PKVTCPNHPDALLVEDYRAGDMICSECGLVVG). Zn(2+) contacts are provided by Cys15, His18, Cys34, and Cys37. 2 tandem repeats follow at residues 124-200 (MSDR…LILK) and 218-294 (FCSN…LIYP).

The protein belongs to the TFIIB family.

Its subcellular location is the nucleus. The protein localises to the chromosome. It catalyses the reaction L-lysyl-[protein] + acetyl-CoA = N(6)-acetyl-L-lysyl-[protein] + CoA + H(+). Its function is as follows. General transcription factor that plays a role in transcription initiation by RNA polymerase II (Pol II). Involved in the pre-initiation complex (PIC) formation and Pol II recruitment at promoter DNA. Together with the TATA box-bound TBP forms the core initiation complex and provides a bridge between TBP and the Pol II-TFIIF complex. Released from the PIC early following the onset of transcription during the initiation and elongation transition and reassociates with TBP during the next transcription cycle. Associates with chromatin to core promoter-specific regions. Binds to two distinct DNA core promoter consensus sequence elements in a TBP-independent manner; these IIB-recognition elements (BREs) are localized immediately upstream (BREu), 5'-[GC][GC][GA]CGCC-3', and downstream (BREd), 5'-[GA]T[TGA][TG][GT][TG][TG]-3', of the TATA box element. Modulates transcription start site selection. Also exhibits autoacetyltransferase activity that contributes to the activated transcription. This chain is Transcription initiation factor IIB, found in Xenopus laevis (African clawed frog).